A 504-amino-acid chain; its full sequence is Topoisomerase I damage affected protein 11 (504 aa).

A disordered region spans residues 32–62 (RKTGRKIRSASSNGYRLEHHRTSSAGSMHSQ). A coiled-coil region spans residues 179-231 (ALLQSLATKELELLECKQKIEDLKKQTQHEEQNYTRRARELHELKEQVSKHLD). T236 bears the Phosphothreonine mark. 2 positions are modified to phosphoserine: S244 and S286. 3 disordered regions span residues 252 to 306 (LESR…SKQS), 332 to 377 (WDDS…SVSR), and 400 to 504 (DVIT…MTDF). Residues 257–287 (ENAGNSSLPSSVSKPKNMGHQSTNQSRSVSP) are compositionally biased toward polar residues. Over residues 290–301 (IQERRQRDDSSD) the composition is skewed to basic and acidic residues. Composition is skewed to polar residues over residues 332–359 (WDDS…QQYD) and 368–377 (KSPSQGSVSR). The span at 403 to 421 (TDNRCDPVYKSDRQHEQKK) shows a compositional bias: basic and acidic residues. Positions 470–479 (TREKKSKRSS) are enriched in basic residues. Positions 491 to 504 (DNSSVKNSVEMTDF) are enriched in polar residues.

Belongs to the TDA11 family.

It localises to the cytoplasm. The polypeptide is Topoisomerase I damage affected protein 11 (TDA11) (Saccharomyces cerevisiae (strain ATCC 204508 / S288c) (Baker's yeast)).